A 142-amino-acid polypeptide reads, in one-letter code: FAD synthase (142 aa).

Residues 9–10 (TF), 14–17 (HPGH), and aspartate 92 each bind ATP.

The protein belongs to the archaeal FAD synthase family. In terms of assembly, homodimer. The cofactor is a divalent metal cation.

The enzyme catalyses FMN + ATP + H(+) = FAD + diphosphate. The protein operates within cofactor biosynthesis; FAD biosynthesis; FAD from FMN: step 1/1. In terms of biological role, catalyzes the transfer of the AMP portion of ATP to flavin mononucleotide (FMN) to produce flavin adenine dinucleotide (FAD) coenzyme. The chain is FAD synthase from Methanohalophilus mahii (strain ATCC 35705 / DSM 5219 / SLP).